The primary structure comprises 666 residues: DNA ligase (666 aa).

NAD(+) is bound by residues 34–38 (DAEYD), 83–84 (SL), and E114. K116 serves as the catalytic N6-AMP-lysine intermediate. NAD(+)-binding residues include R137, E171, K286, and K310. The Zn(2+) site is built by C404, C407, C422, and C427. In terms of domain architecture, BRCT spans 588-666 (NTESTISEKS…EEFFAILKGE (79 aa)).

The protein belongs to the NAD-dependent DNA ligase family. LigA subfamily. It depends on Mg(2+) as a cofactor. The cofactor is Mn(2+).

It catalyses the reaction NAD(+) + (deoxyribonucleotide)n-3'-hydroxyl + 5'-phospho-(deoxyribonucleotide)m = (deoxyribonucleotide)n+m + AMP + beta-nicotinamide D-nucleotide.. DNA ligase that catalyzes the formation of phosphodiester linkages between 5'-phosphoryl and 3'-hydroxyl groups in double-stranded DNA using NAD as a coenzyme and as the energy source for the reaction. It is essential for DNA replication and repair of damaged DNA. The chain is DNA ligase from Mesoplasma florum (strain ATCC 33453 / NBRC 100688 / NCTC 11704 / L1) (Acholeplasma florum).